The chain runs to 211 residues: MAKVLYITAHPLNEEQSFSLAAGTAFIETYKEEHKDDEVIHLDLYKEEIPHIDAHVFSGWGKLQNNKGFEELSQEEQAKVGRLSELSEQFVAADKYVFVTPLWNFSFPPVLKAYIDAVAVAGKTFKYTEQGPVGLLTDKKALHIQARGGIYSEGPATDFEMGHRYLTAIMNFFGVPSFQGLFIEGHAAMPDKAQEIKEDGIRRAKELARTF.

FMN is bound at residue 17-19; sequence SFS.

Belongs to the azoreductase type 1 family. Homodimer. Requires FMN as cofactor.

The enzyme catalyses 2 a quinone + NADH + H(+) = 2 a 1,4-benzosemiquinone + NAD(+). It catalyses the reaction N,N-dimethyl-1,4-phenylenediamine + anthranilate + 2 NAD(+) = 2-(4-dimethylaminophenyl)diazenylbenzoate + 2 NADH + 2 H(+). In terms of biological role, quinone reductase that provides resistance to thiol-specific stress caused by electrophilic quinones. Functionally, also exhibits azoreductase activity. Catalyzes the reductive cleavage of the azo bond in aromatic azo compounds to the corresponding amines. The polypeptide is FMN-dependent NADH:quinone oxidoreductase 3 (Halalkalibacterium halodurans (strain ATCC BAA-125 / DSM 18197 / FERM 7344 / JCM 9153 / C-125) (Bacillus halodurans)).